Consider the following 726-residue polypeptide: Phenylalanine--tRNA ligase beta subunit (726 aa).

A tRNA-binding domain is found at 38–150 (FSSSKGLLFA…NFASLNDDAS (113 aa)). The 74-residue stretch at 394 to 467 (DKKVEINFDE…RFYNYDNFKE (74 aa)) folds into the B5 domain. D445, D451, E454, and E455 together coordinate Mg(2+).

The protein belongs to the phenylalanyl-tRNA synthetase beta subunit family. Type 1 subfamily. In terms of assembly, tetramer of two alpha and two beta subunits. Mg(2+) is required as a cofactor.

It is found in the cytoplasm. It carries out the reaction tRNA(Phe) + L-phenylalanine + ATP = L-phenylalanyl-tRNA(Phe) + AMP + diphosphate + H(+). This is Phenylalanine--tRNA ligase beta subunit from Mycoplasmopsis synoviae (strain 53) (Mycoplasma synoviae).